Here is a 135-residue protein sequence, read N- to C-terminus: Small ribosomal subunit protein uS17 (135 aa).

Positions 1–59 (MAEAKTGAKAAPRVAKAAKAAPKKAAPNDAEAIGAANAANVKGPKHTPRTPKPRGRRKT) are disordered. Positions 8 to 42 (AKAAPRVAKAAKAAPKKAAPNDAEAIGAANAANVK) are enriched in low complexity. Residues 43 to 59 (GPKHTPRTPKPRGRRKT) show a composition bias toward basic residues.

The protein belongs to the universal ribosomal protein uS17 family. As to quaternary structure, part of the 30S ribosomal subunit.

One of the primary rRNA binding proteins, it binds specifically to the 5'-end of 16S ribosomal RNA. This chain is Small ribosomal subunit protein uS17, found in Mycobacterium bovis (strain ATCC BAA-935 / AF2122/97).